We begin with the raw amino-acid sequence, 219 residues long: MASVTDGKTGVKDASDQNFDYMFKLLIIGNSSVGKTSFLFRYADDTFTPAFVSTVGIDFKVKTVYRHEKRVKLQIWDTAGQERYRTITTAYYRGAMGFILMYDITNEESFNAVQDWATQIKTYSWDNAQVILVGNKCDMEEERVVPTEKGQLLAEQLGFDFFEASAKENISVRQAFERLVDAICDKMSDSLDTDPSMLGSSKNTRLSDTPPLLQQNCSC.

Ala2 is modified (N-acetylalanine). Positions 31, 32, 33, 34, 35, 36, 37, 49, and 53 each coordinate GTP. Residue Ser32 participates in GDP binding. Residues Gly34, Lys35, Thr36, and Ser37 each contribute to the GDP site. Residue Thr36 coordinates Mg(2+). The Switch 1 signature appears at 45 to 58 (DTFTPAFVSTVGID). Thr54 and Asp77 together coordinate Mg(2+). A Switch 2 motif is present at residues 78 to 96 (TAGQERYRTITTAYYRGAM). Gly80 serves as a coordination point for GTP. Residue Thr86 is modified to Phosphothreonine; by LRRK2. 3 residues coordinate GTP: Asn135, Lys136, and Asp138. GDP is bound by residues Asn135, Lys136, Asp138, Met139, Ala166, and Lys167. Positions 166 and 167 each coordinate GTP. Phosphoserine occurs at positions 188 and 190. S-geranylgeranyl cysteine attachment occurs at residues Cys217 and Cys219. Position 219 is a cysteine methyl ester (Cys219).

The protein belongs to the small GTPase superfamily. Rab family. In terms of assembly, interacts with RIMS1, RIMS2, RPH3A and RPH3AL. The GTP-bound form interacts with GAS8/DRC4 (via coiled-coil domains). The GTP-bound form interacts with REP15. Interacts with GDI2, CHM and CHML; phosphorylation at Thr-86 disrupts these interactions. Interacts with MADD (via uDENN domain); the GTP-bound form is preferred for interaction. Mg(2+) serves as cofactor. In terms of processing, phosphorylation of Thr-86 in the switch II region by LRRK2 prevents the association of RAB regulatory proteins, including CHM, CHML and RAB GDP dissociation inhibitor GDI2.

The protein localises to the cell membrane. Its subcellular location is the golgi apparatus. The catalysed reaction is GTP + H2O = GDP + phosphate + H(+). Regulated by guanine nucleotide exchange factors (GEFs) which promote the exchange of bound GDP for free GTP. Regulated by GTPase activating proteins (GAPs) which increase the GTP hydrolysis activity. Inhibited by GDP dissociation inhibitors (GDIs) which prevent Rab-GDP dissociation. Its function is as follows. The small GTPases Rab are key regulators of intracellular membrane trafficking, from the formation of transport vesicles to their fusion with membranes. Rabs cycle between an inactive GDP-bound form and an active GTP-bound form that is able to recruit to membranes different sets of downstream effectors directly responsible for vesicle formation, movement, tethering and fusion. The chain is Ras-related protein Rab-3B from Homo sapiens (Human).